Here is a 252-residue protein sequence, read N- to C-terminus: Pimeloyl-[acyl-carrier protein] methyl ester esterase (252 aa).

Residues 15–239 (LVMLHGWAMH…FPHCGHAPFL (225 aa)) enclose the AB hydrolase-1 domain. Residues Trp-21, 81–82 (SL), and 143–147 (FLTLQ) contribute to the substrate site. Catalysis depends on Ser-81, which acts as the Nucleophile. Active-site residues include Asp-207 and His-235. His-235 provides a ligand contact to substrate.

The protein belongs to the AB hydrolase superfamily. Carboxylesterase BioH family. In terms of assembly, monomer.

It is found in the cytoplasm. It catalyses the reaction 6-carboxyhexanoyl-[ACP] methyl ester + H2O = 6-carboxyhexanoyl-[ACP] + methanol + H(+). It participates in cofactor biosynthesis; biotin biosynthesis. Functionally, the physiological role of BioH is to remove the methyl group introduced by BioC when the pimeloyl moiety is complete. It allows to synthesize pimeloyl-ACP via the fatty acid synthetic pathway through the hydrolysis of the ester bonds of pimeloyl-ACP esters. This chain is Pimeloyl-[acyl-carrier protein] methyl ester esterase, found in Nitrosomonas europaea (strain ATCC 19718 / CIP 103999 / KCTC 2705 / NBRC 14298).